A 366-amino-acid chain; its full sequence is 3-isopropylmalate dehydrogenase (366 aa).

Residue 78–91 (GPQWTHLKGSESPE) coordinates NAD(+). Residues Arg-99, Arg-109, Arg-138, and Asp-227 each coordinate substrate. Mg(2+)-binding residues include Asp-227, Asp-251, and Asp-255. An NAD(+)-binding site is contributed by 285 to 297 (GSAPDIAEKNIAN).

Belongs to the isocitrate and isopropylmalate dehydrogenases family. LeuB type 1 subfamily. In terms of assembly, homodimer. Requires Mg(2+) as cofactor. Mn(2+) serves as cofactor.

The protein resides in the cytoplasm. The catalysed reaction is (2R,3S)-3-isopropylmalate + NAD(+) = 4-methyl-2-oxopentanoate + CO2 + NADH. Its pathway is amino-acid biosynthesis; L-leucine biosynthesis; L-leucine from 3-methyl-2-oxobutanoate: step 3/4. Functionally, catalyzes the oxidation of 3-carboxy-2-hydroxy-4-methylpentanoate (3-isopropylmalate) to 3-carboxy-4-methyl-2-oxopentanoate. The product decarboxylates to 4-methyl-2 oxopentanoate. This chain is 3-isopropylmalate dehydrogenase, found in Blochmanniella pennsylvanica (strain BPEN).